We begin with the raw amino-acid sequence, 766 residues long: Exocyst complex component 6 (766 aa).

A coiled-coil region spans residues N28–S90.

This sequence belongs to the SEC15 family. The exocyst complex is composed of Sec3/Exoc1, Sec5/Exoc2, Sec6/Exoc3, Sec8/Exoc4, Sec10/Exoc5, Sec15/Exoc6, Exo70/Exoc7 and Exo84/Exoc8. Interacts with RAB3, RAB8, RAB11 and RAB27. In terms of tissue distribution, detected in developing rhabdomeres in photoreceptor cells.

The protein resides in the cell projection. The protein localises to the rhabdomere. In terms of biological role, component of the exocyst complex involved in the docking of exocytic vesicles with fusion sites on the plasma membrane. This chain is Exocyst complex component 6, found in Drosophila melanogaster (Fruit fly).